The sequence spans 332 residues: Sphingolipid delta(4)-desaturase DES1-like (332 aa).

A run of 3 helical transmembrane segments spans residues 55 to 75 (PWAFLKITLVVILQLSTAAIL), 83 to 103 (ILSIAYFFGSFLNHNLFLAIH), and 119 to 139 (CLGIFANLPIGVPMSVTFQKY). Residues 103–107 (HELSH) carry the Histidine box-1 motif. The Histidine box-2 motif lies at 140-144 (HLEHH). Helical transmembrane passes span 164–184 (LVTNIFAKTIWVFLQLFFYAL), 197–217 (WEFINFLIQIVLDVSVVLFFG), and 222–242 (AYLILSTFVGGGMHPMAGHFI). Positions 271-275 (HNEHH) match the Histidine box-3 motif.

The protein belongs to the fatty acid desaturase type 1 family. DEGS subfamily. In terms of tissue distribution, specifically expressed in flowers.

Its subcellular location is the endoplasmic reticulum membrane. The enzyme catalyses an N-acylsphinganine + 2 Fe(II)-[cytochrome b5] + O2 + 2 H(+) = an N-acylsphing-4-enine + 2 Fe(III)-[cytochrome b5] + 2 H2O. Its function is as follows. Sphingolipid-delta-4-desaturase required for the biosynthesis of delta-4-unsaturated sphingolipids and derivatives. May be required for the biosynthesis of glucosylceramides. This chain is Sphingolipid delta(4)-desaturase DES1-like, found in Arabidopsis thaliana (Mouse-ear cress).